Reading from the N-terminus, the 168-residue chain is CASP-like protein UU-1 (168 aa).

The Cytoplasmic portion of the chain corresponds to 1-17; sequence MVELESQEAVTVASTAD. The helical transmembrane segment at 18–38 threads the bilayer; that stretch reads IAVDVSLRLLAAATSLAAAVV. The Extracellular segment spans residues 39–54; sequence VAANHQQRWGIRVDFT. A helical membrane pass occupies residues 55–75; the sequence is LFQVWIGFVAVNLVCTVYAAA. Topologically, residues 76–95 are cytoplasmic; sequence TAAAAARKAMGRWWLHHADA. Residues 96–116 form a helical membrane-spanning segment; sequence VVVNLEAAATAGAGAIGSIAM. The Extracellular portion of the chain corresponds to 117–136; the sequence is WGNEASGWYAVCRLYRRYCN. Residues 137 to 157 traverse the membrane as a helical segment; sequence AGAAALALSLAAVLLLGVACA. The Cytoplasmic portion of the chain corresponds to 158–168; it reads RSRYPKMPPTT.

Belongs to the Casparian strip membrane proteins (CASP) family. In terms of assembly, homodimer and heterodimers.

It localises to the cell membrane. This Oryza sativa subsp. japonica (Rice) protein is CASP-like protein UU-1.